Here is a 296-residue protein sequence, read N- to C-terminus: Nucleotide-binding protein SMU_1306c (296 aa).

13–20 lines the ATP pocket; that stretch reads GMSGAGKT. Position 63–66 (63–66) interacts with GTP; that stretch reads DMRS.

It belongs to the RapZ-like family.

In terms of biological role, displays ATPase and GTPase activities. In Streptococcus mutans serotype c (strain ATCC 700610 / UA159), this protein is Nucleotide-binding protein SMU_1306c.